The sequence spans 280 residues: Vacuolar protein sorting-associated protein 71 (280 aa).

The segment covering Arg-64–Ser-73 has biased composition (polar residues). The disordered stretch occupies residues Arg-64–Gln-92. A compositionally biased stretch (basic and acidic residues) spans Arg-74–Gln-92. Zn(2+)-binding residues include Cys-244, Cys-247, Cys-256, Cys-259, Cys-264, Cys-268, His-272, and Cys-277. The HIT-type zinc-finger motif lies at Cys-244 to Cys-277.

As to quaternary structure, belongs to the SWR1 complex at least composed of ACT1, ARP4, RVB1, RVB2, ARP6, YAF9, VPS71, VPS72, SWC3, SWC4, SWC5, SWR1 and HTZ1.

It is found in the nucleus. In terms of biological role, participates in the catalytic exchange of histone H2A for the H2A variant HZT1, an euchromatin-specific factor, leading to chromatin remodeling and changes in transcription of targeted genes. Indirectly involved in vacuolar protein sorting. The chain is Vacuolar protein sorting-associated protein 71 (VPS71) from Saccharomyces cerevisiae (strain ATCC 204508 / S288c) (Baker's yeast).